Consider the following 448-residue polypeptide: Signal recognition particle 54 kDa protein (448 aa).

GTP-binding positions include Gly-107 to Thr-114, Asp-189 to Arg-193, and Thr-247 to Asp-250.

It belongs to the GTP-binding SRP family. SRP54 subfamily. As to quaternary structure, part of the signal recognition particle protein translocation system, which is composed of SRP and FtsY. Archaeal SRP consists of a 7S RNA molecule of 300 nucleotides and two protein subunits: SRP54 and SRP19.

The protein localises to the cytoplasm. It catalyses the reaction GTP + H2O = GDP + phosphate + H(+). Its function is as follows. Involved in targeting and insertion of nascent membrane proteins into the cytoplasmic membrane. Binds to the hydrophobic signal sequence of the ribosome-nascent chain (RNC) as it emerges from the ribosomes. The SRP-RNC complex is then targeted to the cytoplasmic membrane where it interacts with the SRP receptor FtsY. This is Signal recognition particle 54 kDa protein from Thermococcus kodakarensis (strain ATCC BAA-918 / JCM 12380 / KOD1) (Pyrococcus kodakaraensis (strain KOD1)).